The chain runs to 303 residues: Sulfate adenylyltransferase subunit 2 (303 aa).

The protein belongs to the PAPS reductase family. CysD subfamily. In terms of assembly, heterodimer composed of CysD, the smaller subunit, and CysN.

The catalysed reaction is sulfate + ATP + H(+) = adenosine 5'-phosphosulfate + diphosphate. Its pathway is sulfur metabolism; hydrogen sulfide biosynthesis; sulfite from sulfate: step 1/3. With CysN forms the ATP sulfurylase (ATPS) that catalyzes the adenylation of sulfate producing adenosine 5'-phosphosulfate (APS) and diphosphate, the first enzymatic step in sulfur assimilation pathway. APS synthesis involves the formation of a high-energy phosphoric-sulfuric acid anhydride bond driven by GTP hydrolysis by CysN coupled to ATP hydrolysis by CysD. This chain is Sulfate adenylyltransferase subunit 2, found in Phocaeicola vulgatus (strain ATCC 8482 / DSM 1447 / JCM 5826 / CCUG 4940 / NBRC 14291 / NCTC 11154) (Bacteroides vulgatus).